The chain runs to 134 residues: Large ribosomal subunit protein bL20 (134 aa).

Belongs to the bacterial ribosomal protein bL20 family.

Binds directly to 23S ribosomal RNA and is necessary for the in vitro assembly process of the 50S ribosomal subunit. It is not involved in the protein synthesizing functions of that subunit. The sequence is that of Large ribosomal subunit protein bL20 from Rhizobium meliloti (strain 1021) (Ensifer meliloti).